We begin with the raw amino-acid sequence, 254 residues long: Zinc finger FYVE domain-containing protein 21 (254 aa).

Residues 44-104 (DKECPRCMQC…QCAGCAPVSR (61 aa)) form an FYVE-type zinc finger. Zn(2+) is bound by residues cysteine 50, cysteine 53, cysteine 66, cysteine 69, cysteine 74, cysteine 77, cysteine 96, and cysteine 99. A PH-like region spans residues 107–254 (ADFYDRQLKL…AKLLYESRDQ (148 aa)).

Interacts with PTK2/FAK1.

Its subcellular location is the cell junction. It localises to the focal adhesion. The protein localises to the cytoplasmic vesicle. It is found in the endosome. Plays a role in cell adhesion, and thereby in cell motility which requires repeated formation and disassembly of focal adhesions. Regulates microtubule-induced PTK2/FAK1 dephosphorylation, an event important for focal adhesion disassembly, as well as integrin beta-1/ITGB1 cell surface expression. In Bos taurus (Bovine), this protein is Zinc finger FYVE domain-containing protein 21 (ZFYVE21).